Consider the following 129-residue polypeptide: Glycine cleavage system H protein (129 aa).

The 83-residue stretch at 24 to 106 (EAVVGITEHA…YGAGWLFRIK (83 aa)) folds into the Lipoyl-binding domain. Lys-65 carries the N6-lipoyllysine modification.

The protein belongs to the GcvH family. As to quaternary structure, the glycine cleavage system is composed of four proteins: P, T, L and H. (R)-lipoate serves as cofactor.

In terms of biological role, the glycine cleavage system catalyzes the degradation of glycine. The H protein shuttles the methylamine group of glycine from the P protein to the T protein. The protein is Glycine cleavage system H protein of Aeromonas salmonicida (strain A449).